Reading from the N-terminus, the 334-residue chain is Uracil-DNA glycosylase (334 aa).

Residues 1–17 (MKRACSRSPSPRRRPSS) show a composition bias toward basic residues. 2 disordered regions span residues 1–63 (MKRA…CRSS) and 79–104 (VTFS…AATS). Polar residues predominate over residues 40–50 (GASNDASTETR). The active-site Proton acceptor is aspartate 178.

This sequence belongs to the uracil-DNA glycosylase (UDG) superfamily. UNG family.

It localises to the host nucleus. The catalysed reaction is Hydrolyzes single-stranded DNA or mismatched double-stranded DNA and polynucleotides, releasing free uracil.. Excises uracil residues from the DNA which can arise as a result of misincorporation of dUMP residues by DNA polymerase or deamination of cytosines. Therefore may reduce deleterious uracil incorporation into the viral genome, particularly in terminally differentiated cells which lack DNA repair enzymes. This is Uracil-DNA glycosylase from Human herpesvirus 1 (strain 17) (HHV-1).